The sequence spans 378 residues: Putative glycosyltransferase ORF378 (378 aa).

Belongs to the glycosyltransferase group 1 family. Glycosyltransferase 4 subfamily.

The protein is Putative glycosyltransferase ORF378 of Acidianus sp. F28 (AFV-2).